Here is a 144-residue protein sequence, read N- to C-terminus: Urease subunit beta (144 aa).

Over residues 110–119 (HAAPAAPAIP) the composition is skewed to low complexity. A disordered region spans residues 110–144 (HAAPAAPAIPARHESAAGDAPSPLKERAGFDNETR). Residues 133–144 (LKERAGFDNETR) are compositionally biased toward basic and acidic residues.

It belongs to the urease beta subunit family. As to quaternary structure, heterotrimer of UreA (gamma), UreB (beta) and UreC (alpha) subunits. Three heterotrimers associate to form the active enzyme.

The protein localises to the cytoplasm. The catalysed reaction is urea + 2 H2O + H(+) = hydrogencarbonate + 2 NH4(+). Its pathway is nitrogen metabolism; urea degradation; CO(2) and NH(3) from urea (urease route): step 1/1. The chain is Urease subunit beta from Micrococcus luteus (strain ATCC 4698 / DSM 20030 / JCM 1464 / CCM 169 / CCUG 5858 / IAM 1056 / NBRC 3333 / NCIMB 9278 / NCTC 2665 / VKM Ac-2230) (Micrococcus lysodeikticus).